The sequence spans 312 residues: tRNA dimethylallyltransferase (312 aa).

Residue 18–25 (GPTASGKS) participates in ATP binding. 20-25 (TASGKS) contacts substrate. Interaction with substrate tRNA regions lie at residues 43–46 (DSMQ) and 167–171 (QRILR).

Belongs to the IPP transferase family. As to quaternary structure, monomer. Requires Mg(2+) as cofactor.

The catalysed reaction is adenosine(37) in tRNA + dimethylallyl diphosphate = N(6)-dimethylallyladenosine(37) in tRNA + diphosphate. Catalyzes the transfer of a dimethylallyl group onto the adenine at position 37 in tRNAs that read codons beginning with uridine, leading to the formation of N6-(dimethylallyl)adenosine (i(6)A). This Azorhizobium caulinodans (strain ATCC 43989 / DSM 5975 / JCM 20966 / LMG 6465 / NBRC 14845 / NCIMB 13405 / ORS 571) protein is tRNA dimethylallyltransferase.